The chain runs to 437 residues: 2-methylisoborneol synthase (437 aa).

The disordered stretch occupies residues 32–125; that stretch reads AHDSEATVGG…IPGLYHHPVP (94 aa). Positions 59-73 are enriched in pro residues; the sequence is PPSPAAPPTDVPAPE. Positions 194, 195, 199, 342, 346, and 350 each coordinate Mg(2+).

This sequence belongs to the terpene synthase family. 2-methylisoborneol synthase subfamily. It depends on Mg(2+) as a cofactor.

It carries out the reaction (E)-2-methylgeranyl diphosphate + H2O = 2-methylisoborneol + diphosphate. In terms of biological role, catalyzes the cyclization of 2-methylgeranyl diphosphate (2-MeGPP) to 2-methylisoborneol (2-MIB), which likely involves the intermediacy of 2-methyllinalyl diphosphate. In Streptomyces griseus, this protein is 2-methylisoborneol synthase.